We begin with the raw amino-acid sequence, 121 residues long: Type II secretion system protein I (121 aa).

A propeptide spans 1 to 6 (leader sequence); it reads MRRQKG. Methionine 7 is modified (N-methylmethionine). A helical transmembrane segment spans residues 7-27; that stretch reads MTLVEVLVALSVFALAGIAVL.

Belongs to the GSP I family. As to quaternary structure, type II secretion is composed of four main components: the outer membrane complex, the inner membrane complex, the cytoplasmic secretion ATPase and the periplasm-spanning pseudopilus. Interacts with core component OutG. Post-translationally, cleaved by prepilin peptidase. In terms of processing, methylated by prepilin peptidase at the amino group of the N-terminal methionine once the leader sequence is cleaved by prepilin peptidase.

It is found in the cell inner membrane. Its function is as follows. Component of the type II secretion system required for the energy-dependent secretion of extracellular factors such as proteases and toxins from the periplasm. Part of the pseudopilus tip complex that is critical for the recognition and binding of secretion substrates. This chain is Type II secretion system protein I (outI), found in Pectobacterium carotovorum subsp. carotovorum (Erwinia carotovora subsp. carotovora).